The following is a 309-amino-acid chain: Homoserine kinase (309 aa).

Position 95-105 (95-105 (PQSRGLGSSAA)) interacts with ATP.

The protein belongs to the GHMP kinase family. Homoserine kinase subfamily.

The protein resides in the cytoplasm. The catalysed reaction is L-homoserine + ATP = O-phospho-L-homoserine + ADP + H(+). It participates in amino-acid biosynthesis; L-threonine biosynthesis; L-threonine from L-aspartate: step 4/5. Its function is as follows. Catalyzes the ATP-dependent phosphorylation of L-homoserine to L-homoserine phosphate. The polypeptide is Homoserine kinase (Corynebacterium efficiens (strain DSM 44549 / YS-314 / AJ 12310 / JCM 11189 / NBRC 100395)).